Reading from the N-terminus, the 461-residue chain is Argininosuccinate lyase (461 aa).

Belongs to the lyase 1 family. Argininosuccinate lyase subfamily. In terms of assembly, homotetramer.

It is found in the cytoplasm. The enzyme catalyses 2-(N(omega)-L-arginino)succinate = fumarate + L-arginine. It participates in amino-acid biosynthesis; L-arginine biosynthesis; L-arginine from L-ornithine and carbamoyl phosphate: step 3/3. This Nostoc punctiforme (strain ATCC 29133 / PCC 73102) protein is Argininosuccinate lyase.